A 332-amino-acid chain; its full sequence is UPF0194 membrane protein YbhG (332 aa).

Positions 1–16 are cleaved as a signal peptide; the sequence is MMKKPVVIGLAVVVLA. Residues 141-210 are a coiled coil; it reads RTISANDLEN…NLQDSTLIAP (70 aa).

Belongs to the UPF0194 family.

It localises to the periplasm. The sequence is that of UPF0194 membrane protein YbhG (ybhG) from Shigella flexneri.